The following is a 184-amino-acid chain: Ribosome-recycling factor (184 aa).

This sequence belongs to the RRF family.

Its subcellular location is the cytoplasm. Functionally, responsible for the release of ribosomes from messenger RNA at the termination of protein biosynthesis. May increase the efficiency of translation by recycling ribosomes from one round of translation to another. This is Ribosome-recycling factor from Acholeplasma laidlawii (strain PG-8A).